The sequence spans 515 residues: Maturase K (515 aa).

It belongs to the intron maturase 2 family. MatK subfamily.

It localises to the plastid. The protein localises to the chloroplast. Its function is as follows. Usually encoded in the trnK tRNA gene intron. Probably assists in splicing its own and other chloroplast group II introns. The protein is Maturase K of Pinus densiflora (Japanese red pine).